The following is a 349-amino-acid chain: Ferredoxin--NADP reductase 3 (349 aa).

Positions 34, 42, 46, 86, 120, 287, and 328 each coordinate FAD.

This sequence belongs to the ferredoxin--NADP reductase type 2 family. In terms of assembly, homodimer. Requires FAD as cofactor.

The enzyme catalyses 2 reduced [2Fe-2S]-[ferredoxin] + NADP(+) + H(+) = 2 oxidized [2Fe-2S]-[ferredoxin] + NADPH. The polypeptide is Ferredoxin--NADP reductase 3 (Lysinibacillus sphaericus (strain C3-41)).